The following is a 118-amino-acid chain: UPF0102 protein NE0719 (118 aa).

It belongs to the UPF0102 family.

This Nitrosomonas europaea (strain ATCC 19718 / CIP 103999 / KCTC 2705 / NBRC 14298) protein is UPF0102 protein NE0719.